The chain runs to 436 residues: Glutamyl-tRNA reductase 2 (436 aa).

Substrate is bound by residues 49 to 52, Ser106, 111 to 113, and Gln117; these read TCNR and EPQ. Residue Cys50 is the Nucleophile of the active site. Residue 186–191 coordinates NADP(+); sequence GAGKMC.

The protein belongs to the glutamyl-tRNA reductase family. Homodimer.

It catalyses the reaction (S)-4-amino-5-oxopentanoate + tRNA(Glu) + NADP(+) = L-glutamyl-tRNA(Glu) + NADPH + H(+). Its pathway is porphyrin-containing compound metabolism; protoporphyrin-IX biosynthesis; 5-aminolevulinate from L-glutamyl-tRNA(Glu): step 1/2. Catalyzes the NADPH-dependent reduction of glutamyl-tRNA(Glu) to glutamate 1-semialdehyde (GSA). This chain is Glutamyl-tRNA reductase 2, found in Koribacter versatilis (strain Ellin345).